The chain runs to 482 residues: Serine carboxypeptidase-like 26 (482 aa).

An N-terminal signal peptide occupies residues M1–A28. 3 disulfides stabilise this stretch: C101–C366, C263–C274, and C298–C333. N152 is a glycosylation site (N-linked (GlcNAc...) asparagine). S194 is an active-site residue. 4 N-linked (GlcNAc...) asparagine glycosylation sites follow: N269, N301, N354, and N375. Residues D403 and H455 contribute to the active site.

It belongs to the peptidase S10 family.

It localises to the secreted. In terms of biological role, acts as a positive regulator of grain size by controlling grain width, filling and weight. High expression of GS5 in the grain is correlated with large grain size. The chain is Serine carboxypeptidase-like 26 from Oryza sativa subsp. japonica (Rice).